Reading from the N-terminus, the 564-residue chain is Apyrase (564 aa).

The N-terminal stretch at 1 to 25 (MAGKPGIQLFVIFLLLSSFAAVVWA) is a signal peptide. Residues D48, H50, D99, N131, H234, and H258 each contribute to the a divalent metal cation site. An AMP-binding site is contributed by R371. An N-linked (GlcNAc...) asparagine glycan is attached at N391. Positions 406, 425, and 515 each coordinate AMP.

Belongs to the 5'-nucleotidase family. A divalent metal cation serves as cofactor. In terms of tissue distribution, female salivary gland (at protein level). Low-level expression in male tissues. Not detected in female carcasses without salivary glands.

It localises to the secreted. It carries out the reaction a ribonucleoside 5'-triphosphate + 2 H2O = a ribonucleoside 5'-phosphate + 2 phosphate + 2 H(+). Functionally, facilitates hematophagy by inhibiting ADP-dependent platelet aggregation in the host. Cleaves adenosine triphosphate (ATP) and adenosine diphosphate (ADP) to adenosine monophosphate (AMP) and inorganic phosphate. May reduce probing time by facilitating the speed of locating blood. This Aedes albopictus (Asian tiger mosquito) protein is Apyrase.